The following is a 269-amino-acid chain: MPGNKIGLLNVHHRVKLLYGEGLHIRNLTPGTEIAFYVPNNSTPQGDGVAVVMSGEKMKVIIVEDEFLAQQELSWLINTHSQMEIVGSFDDGLDVLKFLQHNKVDAIFLDINIPSLDGVLLAQNISQFAHKPFIVFITAWKEHAVEAFELEAFDYILKPYQESRIINMLQKLTTAWEQQNNAASGLASAAPRENDTINLIKDERIIVTSIHDIYYAEAHEKMTFVYTRRESFVMPMNITEFVPDALNIAASGQSKFLLTVAQVSIANRF.

One can recognise a Response regulatory domain in the interval 59–173 (KVIIVEDEFL…RIINMLQKLT (115 aa)). A 4-aspartylphosphate modification is found at Asp-110. The HTH LytTR-type domain occupies 197–269 (INLIKDERII…VAQVSIANRF (73 aa)).

In terms of biological role, may be involved in the regulation of fimbrial expression. The sequence is that of Protein MrkE (mrkE) from Klebsiella pneumoniae.